The following is a 179-amino-acid chain: MGNEASYQTELCNHFDQEEIRRLGKSFRKLDLDKSGSLSIEEFMRLPELQQNPLVGRVIDIFDTDGNGEVDFHEFIVGTSQFSVKGDEEQKLRFAFRIYDMDNDGFISNGELFQVLKMMVGNNLKDWQLQQLVDKSILVLDKDGDGRISFEEFSDVVKTMEIHKKLVVFVEHGQEDLKA.

Glycine 2 carries N-myristoyl glycine lipidation. EF-hand domains follow at residues 18 to 53, 57 to 85, 87 to 122, and 128 to 163; these read EEIRRLGKSFRKLDLDKSGSLSIEEFMRLPELQQNP, RVIDIFDTDGNGEVDFHEFIVGTSQFSVK, DEEQKLRFAFRIYDMDNDGFISNGELFQVLKMMVGN, and QLQQLVDKSILVLDKDGDGRISFEEFSDVVKTMEIH. Positions 31, 33, 35, 37, 42, 63, 65, 67, 69, 74, 100, 102, 104, and 111 each coordinate Ca(2+). Residues 131 to 136 are calcineurin A binding; the sequence is QLVDKS. Ca(2+)-binding residues include aspartate 141, aspartate 143, aspartate 145, arginine 147, and glutamate 152.

This sequence belongs to the calcineurin regulatory subunit family. As to quaternary structure, forms a complex composed of a calmodulin-dependent catalytic subunit (also known as calcineurin A) and a regulatory Ca(2+)-binding subunit (also known as calcineurin B). There are three catalytic subunits, each encoded by a separate gene (PPP3CA, PPP3CB, and PPP3CC) and two regulatory subunits which are also encoded by separate genes (PPP3R1 and PPP3R2). Interacts with SPATA33 (via PQIIIT motif). As to expression, expressed in osteoblasts and bone marrow (at protein level). Expressed in the testis. Expressed in the sperm midpiece in a SPATA33-dependent manner (at protein level).

It localises to the mitochondrion. In terms of biological role, regulatory subunit of calcineurin, a calcium-dependent, calmodulin stimulated protein phosphatase. Confers calcium sensitivity. The protein is Calcineurin subunit B type 2 (Ppp3r2) of Mus musculus (Mouse).